Here is a 103-residue protein sequence, read N- to C-terminus: UPF0235 protein Rleg2_3707 (103 aa).

Belongs to the UPF0235 family.

This chain is UPF0235 protein Rleg2_3707, found in Rhizobium leguminosarum bv. trifolii (strain WSM2304).